A 494-amino-acid polypeptide reads, in one-letter code: DEAD-box ATP-dependent RNA helicase CshA (494 aa).

Positions 3-31 match the Q motif motif; sequence ITFQDFNLSSDLMKAINRMGFEEATPIQA. The Helicase ATP-binding domain occupies 34-204; sequence IPLGLSNKDV…ERFMTEPEHV (171 aa). Position 47–54 (47–54) interacts with ATP; sequence AQTGTGKT. The DEAD box motif lies at 152 to 155; it reads DEAD. The Helicase C-terminal domain occupies 215 to 375; it reads NIQQFYLEVQ…RMKEPTLDEA (161 aa). The segment at 413–494 is required for dimerization or oligomerization; that stretch reads VTVVAAAIKM…SGDRRQKKSY (82 aa). Positions 429–494 are disordered; sequence DTPVRLTDEA…SGDRRQKKSY (66 aa). Residues 443–452 show a composition bias toward basic residues; sequence KRYKNQRSSK. Basic and acidic residues predominate over residues 473 to 488; sequence SYDKKRSNDRRSSGDR.

It belongs to the DEAD box helicase family. CshA subfamily. As to quaternary structure, homodimer or oligomer. May interact with RNA helicases CshB and DbpA (DeaD). Probably a component of the RNA degradosome complex composed of rny, rnjA, rnjB, pnp, pfkA and eno, and possibly also rnpA (although rnjA and rnjB's presence is unclear). Interacts with ribosomal proteins L1 and L3 (rplA and rplC) and the protein component of RNase RnpA. Interacts with the RNA polymerase core. Mg(2+) serves as cofactor.

The protein resides in the cytoplasm. Its subcellular location is the nucleoid. It is found in the cell membrane. The catalysed reaction is ATP + H2O = ADP + phosphate + H(+). Its activity is regulated as follows. RNA helicase activity is inhibited by EDTA. Its function is as follows. The most abundant DEAD-box RNA helicase. An ATP-dependent RNA helicase with RNA-dependent ATPase activity. May work in conjunction with the cold shock proteins to ensure proper initiation of transcription at low and optimal temperatures. In vitro, unwinds dsRNA in both 5'- and 3'- directions. Plays a role in ribosomal 50S subunit assembly. Its deletion leads to changes in mRNA levels for over 200 transcripts. The chain is DEAD-box ATP-dependent RNA helicase CshA from Bacillus subtilis (strain 168).